Here is a 206-residue protein sequence, read N- to C-terminus: Cytochrome b6-f complex iron-sulfur subunit, chloroplastic (206 aa).

Residues 1–29 (MAMLSSRRVAAPAKASAIRRSRVMPVVRA) constitute a chloroplast transit peptide. The chain crosses the membrane as a helical span at residues 39-68 (MNKRNIMNLILAGGAGLPITTLALGYGAFF). The region spanning 92–188 (AGEWLKTHLA…CDVAESGLVT (97 aa)) is the Rieske domain. Cysteine 134, histidine 136, cysteine 152, and histidine 155 together coordinate [2Fe-2S] cluster. A disulfide bond links cysteine 139 and cysteine 154.

This sequence belongs to the Rieske iron-sulfur protein family. The 4 large subunits of the cytochrome b6-f complex are cytochrome b6, subunit IV (17 kDa polypeptide, petD), cytochrome f and the Rieske protein, while the 4 small subunits are petG, petL, petM and petN. The complex functions as a dimer. The cofactor is [2Fe-2S] cluster.

It localises to the plastid. The protein localises to the chloroplast thylakoid membrane. It catalyses the reaction 2 oxidized [plastocyanin] + a plastoquinol + 2 H(+)(in) = 2 reduced [plastocyanin] + a plastoquinone + 4 H(+)(out). Component of the cytochrome b6-f complex, which mediates electron transfer between photosystem II (PSII) and photosystem I (PSI), cyclic electron flow around PSI, and state transitions. The protein is Cytochrome b6-f complex iron-sulfur subunit, chloroplastic (petC) of Chlamydomonas reinhardtii (Chlamydomonas smithii).